The following is a 309-amino-acid chain: MTATNHPKLFKRPVDGVLLLDKPGGMTSNEALQRVKRLFHAKKAGHTGSLDPLATGLLPICLGEATKFSQFLLEADKSYSVKGRLGVRTASGDSESPILTERPIPKLTKRALEKTLFAFRGVIDQTPSMYSALKHKGQPLYKLARQGIEVERKTRQVTIYELTLLDWDNESIELYVHCSKGTYIRTLLDDVGEALGCGAHVVALRRLRVAHYHEDQMIKLAHLEREYDKANYTGLDRYLLPLETMVSHFPAIKLSSSTAFYLQQGQAVMVPNAPTHGFVRLRDQNDQFIGIGEILSDARIAPRRLIQKR.

The active-site Nucleophile is D51.

It belongs to the pseudouridine synthase TruB family. Type 1 subfamily.

It catalyses the reaction uridine(55) in tRNA = pseudouridine(55) in tRNA. Its function is as follows. Responsible for synthesis of pseudouridine from uracil-55 in the psi GC loop of transfer RNAs. This Coxiella burnetii (strain RSA 493 / Nine Mile phase I) protein is tRNA pseudouridine synthase B.